Reading from the N-terminus, the 255-residue chain is Putative cysteine-rich repeat secretory protein 27 (255 aa).

A signal peptide spans 1–26 (MISKFGSVHILAVVAIQLLIIPSVSS). Gnk2-homologous domains lie at 33–135 (YLHH…TINS) and 141–252 (YEND…LYPF).

The protein belongs to the cysteine-rich repeat secretory protein family.

It is found in the secreted. The chain is Putative cysteine-rich repeat secretory protein 27 (CRRSP27) from Arabidopsis thaliana (Mouse-ear cress).